Reading from the N-terminus, the 257-residue chain is UPF0246 protein Mmc1_3117 (257 aa).

The protein belongs to the UPF0246 family.

The chain is UPF0246 protein Mmc1_3117 from Magnetococcus marinus (strain ATCC BAA-1437 / JCM 17883 / MC-1).